The chain runs to 564 residues: Potassium-transporting ATPase potassium-binding subunit (564 aa).

10 helical membrane-spanning segments follow: residues 4–24, 67–87, 135–155, 179–199, 258–278, 286–306, 382–402, 420–440, 487–507, and 528–548; these read YDYWLILAFFAVVLLPAPFLG, TLALLAFNLAGFLLLFAILLF, VGLTVQNFVSAATGLAVLVAL, LYGLLPLCLLLALYLVWQGVP, FEVASIILIPVALVFTFGHYV, AIIGCMLALFIIGGATSLWAE, AGLYGMLLNVLIAVFLAGLMI, LLVVTLLVMPVGVLVLGAIAA, LMLGLGMLIGRFGYILPVLAL, and GPLFVTLLTVTILLLGGLTFL.

Belongs to the KdpA family. The system is composed of three essential subunits: KdpA, KdpB and KdpC.

It localises to the cell inner membrane. Its function is as follows. Part of the high-affinity ATP-driven potassium transport (or Kdp) system, which catalyzes the hydrolysis of ATP coupled with the electrogenic transport of potassium into the cytoplasm. This subunit binds the periplasmic potassium ions and delivers the ions to the membrane domain of KdpB through an intramembrane tunnel. The protein is Potassium-transporting ATPase potassium-binding subunit of Pseudomonas fluorescens (strain Pf0-1).